A 433-amino-acid polypeptide reads, in one-letter code: Signal recognition particle 54 kDa protein (433 aa).

GTP is bound by residues 106-113, 186-190, and 244-247; these read GVEGSGKT, DTAGR, and TKMD.

Belongs to the GTP-binding SRP family. SRP54 subfamily. Part of the signal recognition particle protein translocation system, which is composed of SRP and FtsY. Archaeal SRP consists of a 7S RNA molecule of 300 nucleotides and two protein subunits: SRP54 and SRP19.

It is found in the cytoplasm. It catalyses the reaction GTP + H2O = GDP + phosphate + H(+). In terms of biological role, involved in targeting and insertion of nascent membrane proteins into the cytoplasmic membrane. Binds to the hydrophobic signal sequence of the ribosome-nascent chain (RNC) as it emerges from the ribosomes. The SRP-RNC complex is then targeted to the cytoplasmic membrane where it interacts with the SRP receptor FtsY. The polypeptide is Signal recognition particle 54 kDa protein (Pyrobaculum islandicum (strain DSM 4184 / JCM 9189 / GEO3)).